Here is a 167-residue protein sequence, read N- to C-terminus: Shikimate kinase (167 aa).

ATP is bound at residue 8-15 (GFMGSGKT).

It belongs to the shikimate kinase family.

It localises to the cytoplasm. The enzyme catalyses shikimate + ATP = 3-phosphoshikimate + ADP + H(+). The protein operates within metabolic intermediate biosynthesis; chorismate biosynthesis; chorismate from D-erythrose 4-phosphate and phosphoenolpyruvate: step 5/7. This chain is Shikimate kinase, found in Helicobacter hepaticus (strain ATCC 51449 / 3B1).